The sequence spans 469 residues: Uronate isomerase (469 aa).

This sequence belongs to the metallo-dependent hydrolases superfamily. Uronate isomerase family.

It carries out the reaction D-glucuronate = D-fructuronate. The catalysed reaction is aldehydo-D-galacturonate = keto-D-tagaturonate. Its pathway is carbohydrate metabolism; pentose and glucuronate interconversion. This Corynebacterium efficiens (strain DSM 44549 / YS-314 / AJ 12310 / JCM 11189 / NBRC 100395) protein is Uronate isomerase.